Reading from the N-terminus, the 517-residue chain is Maturase K (517 aa).

It belongs to the intron maturase 2 family. MatK subfamily.

It is found in the plastid. It localises to the chloroplast. Its function is as follows. Usually encoded in the trnK tRNA gene intron. Probably assists in splicing its own and other chloroplast group II introns. The protein is Maturase K of Trillium grandiflorum (Large-flowered trillium).